The following is a 1251-amino-acid chain: MLEKFHKNKKDSYLNKEEGSLTSDGSDSPKEILETSERIVKKALQLTEETDENVHPEKMQLQKSNGVAFSLSRDSLETNDSFVASGPNQSNTGLGLDTLEEQEEKEIFFAKLEQEASSPIDYSRLNKELNLSDSIVLAPFVRNESEKEVESTAEEKCESYSEDFEEDTDANPAFKTEESQEPNSGMLAKVVLLDSQDSTTEFQKAAETSGVALSEHDLPQEVGGTEMNEAGTLCGQTTSDTEALHHAYHHHIDQSLGDTDEQKIHSSSMAISQCLVQVTSQNHNLYSKNTSTTESDLPTVEEFMRPIKGDCYNARGFDLEPESPVKVIGSTVNEHVNHLPYKEHKNESVWETNLLEKFNREDSIFLQTAANEDSFLRMPGKEIQTSEVQPDVLSKEIIQDCLLSQGSKTKQVLQSCCLKNEKSESTTTKQMLYKNIRSTTPLHKKKSSYGPHGVVRSSGYGKSTSYSKQSIPATERKIPKETLKKSIMKCRSPADKARSKEALFTTRTIRSAANQQASKEDISRAMPDQSVVQNLGHQVVDSFRQHHSDLPVSPVKSCERELRLLRRAQVAEEDLSRARDVIQQLTSTVSEKEKEMETKIVELKTRYEKELSQLGQENYVLQSKLRSVEELSKEKRWIHQTGTVSVPEEKLAQIQKEMEDQEVIIQGYQQENERLYKQMKDLQIQNKKNEEQMYKENQCLMSELIALREKVERINIQSQIVRESEPARNQSFTELISELRAARKEETKLREEIRRLKQDKQALELDLGQAKKERDLAKVQITSTSSEKSYEFKIMEETYKQEILHLKRRLHWYAENQDLLDKDAARLKEAREEIEKLKQEVKKLRAEAGDHQCVQQKKRLRDRAADAKRIQDLERQIKEMEGILKRRYPNSLPALIYAAAAAEKTNDLSAKTNTTDFLERRIKKLETELEGKDDEAKTSLRAMEQQFQKIKMQYEQRLAELEQLLAYKWKSESPKLNGDKANCIELELQLQNLKKTHQITVENLQTEIENLKSQNSQLKLRSKKDNKDLQLADWQMKQGNTKEKLLKLNQELITKNREIQDLTKTVEKLQKERMAMLSDNNLRNKTDNKENRQESLKNNTVATEKRNSCNSEPLIGIFNNDKIYQPHNFSDSNVLEVLQENARLKEEVEKLSLEMNQQRVKSQATLAYSENNIRRIQEDTAEYVAALKASHQREVEKILSQYTKDDSASKVAELNGRISTQEILIKHLQEQISEHQRHQEALLVSQMREEF.

Basic and acidic residues-rich tracts occupy residues 1–19 and 144–159; these read MLEK…KEEG and ESEK…KCES. 3 disordered regions span residues 1 to 33, 144 to 183, and 442 to 473; these read MLEK…KEIL, ESEK…QEPN, and LHKK…SIPA. Acidic residues predominate over residues 160 to 169; it reads YSEDFEEDTD. The segment covering 457 to 470 has biased composition (low complexity); it reads SSGYGKSTSYSKQS. Coiled coils occupy residues 559–782, 813–1165, and 1210–1242; these read EREL…VQIT, YAEN…SQAT, and KVAE…QEAL. Residues 1078–1100 are disordered; sequence SDNNLRNKTDNKENRQESLKNNT. The span at 1082 to 1095 shows a compositional bias: basic and acidic residues; the sequence is LRNKTDNKENRQES.

The protein belongs to the CEP162 family. In terms of tissue distribution, expressed in retina and brain (at protein level).

The protein resides in the cytoplasm. It localises to the cytoskeleton. The protein localises to the microtubule organizing center. Its subcellular location is the centrosome. It is found in the centriole. The protein resides in the nucleus. Its function is as follows. Required to promote assembly of the transition zone in primary cilia. Acts by specifically recognizing and binding the axonemal microtubule. Plays a role in cell proliferation and differentiation in the neuroretina. Has an ATPase activity in vitro. In Coturnix coturnix (Common quail), this protein is Centrosomal protein of 162 kDa (CEP162).